The primary structure comprises 1487 residues: MVSSGCRMRSLWFIIIISFSPSTEGFSRAALPFGLVRRELSCEGYSIDLRCPGSDVIMIESANYGRTDDKICDADPFQMENTDCYLPDAFKIMTQRCNNRTQCIVVTGSDVFPDPCPGTYKYLEVQYECVPYSKMLVFVCPGTLKAIVDSPCIYEAEQKSGAWCKDPLQAADKIYFMPWTPYRTDTLIEYASLEDFQNSRQTTTYKLPNRVDGTGFVVYDGAVFFNKERTRNIVKFDLRTRIKSGEAIINYANYHDTSPYRWGGKTDIDLAVDENGLWVIYATEQNNGMIVISQLNPYTLRFEATWETAYDKRAASNAFMICGVLYVVRSVYQDNESEAGKNTIDYIYNTRLSRGEYVDVPFPNQYQYIAAVDYNPRDNQLYVWNNNFILRYSLEFGPPDPAQVPTTAVTITSSAELFKTTISTTSSASQRGPVSSTAAGPQDGSRGTKPPPAVSTTKIPPVTNIFPLPERFCEALDWKGIKWPQTQRGMMVERPCPKGTRGTASYLCMASTGTWNPKGPDLSNCTSHWVNQLAQKIRSGENAASLANELAKHTKGHVFAGDVSSSVRLMEQLVDILDAQLQELKPSEKDSAGRSYNKLQKREKTCRAYLKAIVDTVDNLLRAEALESWKHMNSSEQAHTATMLLDTLEEGAFVLADNLLEPTRVSMPTENIVLEVAVLSTEGQVQDFKFPLGLKGLGSSIQLSANTVKQNSRNGLAKLVFIIYRSLGQFLSTENATIKLGADLMGRNSTIAVNSPVISVSINKESSRVYLTDPVLFTLPHIDPDNYFNANCSFWNYSERTMMGYWSTQGCKLVDTNKTRTTCACSHLTNFAILMAHREIAYKDGVHHLLLTVITWVGIVVSLVCLAICIFTFCFFRGLQSDRNTIHKNLCINLFIAEFIFLIGIDKTKYTIACPVFAGLLHFFFLAAFSWMCLEGVQLYLMLVEVFESEYSRKKYYYVAGYLFPATVVGVSAAIDYKSYGTVQACWLHVDNYFIWSFIGPVTFIILLNIIFLVITLCKMVKHSNTLKPDSSRLENINNYRVCDGYYNTDLPGYEDNKPFIKSWVLGAFALLCLLGLTWSFGLLFVNEETVVMAYLFTAFNAFQGLFIFIFHCALQKKVRKEYGKCFRHWYCCGGLPTESPHSSVKASTTRTSARYSSGTQSRIRRMWNDTVRKQSESSFISGDINSTSTLNQGMTGNYLLTNPLLRPHGTNNPYNTLLAETVVCNAPSAPAFNSPGHSLNNARDTSAMDTLPLNGNFNNSYSLRKADYHDGVQVVDCGLSLNDTAFEKMIISELVHNNLRGGNKTHNLELKLPVKPVIGGSSSEDDAIVADASSLMHGDNPGLEFRHKELEAPLIPQRTHSLLYQPQKKVKPEATDSYVSQLTAEADDHLQSPNRDSLYTSMPNLRDSPYPESSPDMAEDLSPSRRSENEDIYYKSMPNLGAGRHLHMCYQISRGNSDGYIIPINKEGCIPEGDVREGQMQLVTSL.

An N-terminal signal peptide occupies residues 1-25 (MVSSGCRMRSLWFIIIISFSPSTEG). At 26–855 (FSRAALPFGL…VHHLLLTVIT (830 aa)) the chain is on the extracellular side. An SUEL-type lectin domain is found at 41-130 (SCEGYSIDLR…KYLEVQYECV (90 aa)). N-linked (GlcNAc...) asparagine glycosylation is present at Asn99. Residues 139–398 (VCPGTLKAIV…ILRYSLEFGP (260 aa)) form the Olfactomedin-like domain. A compositionally biased stretch (polar residues) spans 423–439 (STTSSASQRGPVSSTAA). The segment at 423 to 461 (STTSSASQRGPVSSTAAGPQDGSRGTKPPPAVSTTKIPP) is disordered. N-linked (GlcNAc...) asparagine glycans are attached at residues Asn524 and Asn735. Residues 663–841 (TRVSMPTENI…AILMAHREIA (179 aa)) enclose the GAIN-B domain. 2 disulfides stabilise this stretch: Cys792–Cys823 and Cys811–Cys825. The segment at 792–841 (CSFWNYSERTMMGYWSTQGCKLVDTNKTRTTCACSHLTNFAILMAHREIA) is GPS. The segment at 829–841 (TNFAILMAHREIA) is stachel. The chain crosses the membrane as a helical span at residues 856 to 876 (WVGIVVSLVCLAICIFTFCFF). The Cytoplasmic portion of the chain corresponds to 877–884 (RGLQSDRN). A helical transmembrane segment spans residues 885 to 905 (TIHKNLCINLFIAEFIFLIGI). Topologically, residues 906 to 911 (DKTKYT) are extracellular. The chain crosses the membrane as a helical span at residues 912 to 932 (IACPVFAGLLHFFFLAAFSWM). Topologically, residues 933–955 (CLEGVQLYLMLVEVFESEYSRKK) are cytoplasmic. The helical transmembrane segment at 956–976 (YYYVAGYLFPATVVGVSAAID) threads the bilayer. Residues 977–994 (YKSYGTVQACWLHVDNYF) lie on the Extracellular side of the membrane. The helical transmembrane segment at 995 to 1015 (IWSFIGPVTFIILLNIIFLVI) threads the bilayer. The Cytoplasmic segment spans residues 1016–1064 (TLCKMVKHSNTLKPDSSRLENINNYRVCDGYYNTDLPGYEDNKPFIKSW). The chain crosses the membrane as a helical span at residues 1065–1085 (VLGAFALLCLLGLTWSFGLLF). Over 1086–1090 (VNEET) the chain is Extracellular. Residues 1091–1111 (VVMAYLFTAFNAFQGLFIFIF) form a helical membrane-spanning segment. Positions 1386–1430 (EADDHLQSPNRDSLYTSMPNLRDSPYPESSPDMAEDLSPSRRSEN) are disordered. The span at 1392-1404 (QSPNRDSLYTSMP) shows a compositional bias: polar residues. 3 positions are modified to phosphoserine: Ser1402, Ser1437, and Ser1458.

It belongs to the G-protein coupled receptor 2 family. Adhesion G-protein coupled receptor (ADGR) subfamily. Heterodimer of 2 chains generated by proteolytic processing; the large extracellular N-terminal fragment and the membrane-bound C-terminal fragment predominantly remain associated and non-covalently linked. Autoproteolytically processed at the GPS region of the GAIN-B domain; this cleavage modulates receptor activity. In terms of tissue distribution, ubiquitously expressed. In neurons, specifically localizes to dendritic domains of CA1 pyramidal neurons in the S. lacunosummoleculare.

The protein localises to the postsynaptic cell membrane. With respect to regulation, forms a heterodimer of 2 chains generated by proteolytic processing that remain associated through non-covalent interactions mediated by the GAIN-B domain. In the inactivated receptor, the Stachel sequence (also named stalk) is embedded in the GAIN-B domain, where it adopts a beta-strand conformation. On activation, the Stachel moves into the 7 transmembrane region and adopts a twisted hook-shaped configuration that forms contacts within the receptor, leading to coupling of a G-alpha protein, which activates signaling. The cleaved GAIN-B and N-terminal domains can then dissociate from the rest of the receptor. Its function is as follows. Orphan adhesion G-protein coupled receptor (aGPCR), which mediates synapse specificity. Ligand binding causes a conformation change that triggers signaling via guanine nucleotide-binding proteins (G proteins) and modulates the activity of downstream effectors. Following G-protein coupled receptor activation, associates with cell adhesion molecules that are expressed at the surface of adjacent cells to direct synapse specificity. Specifically mediates the establishment of perforant-path synapses on CA1-region pyramidal neurons in the hippocampus. Localizes to postsynaptic spines in excitatory synapses in the S.lacunosum-moleculare and interacts with presynaptic cell adhesion molecules, such as teneurins, promoting synapse formation. The sequence is that of Adhesion G protein-coupled receptor L2 from Mus musculus (Mouse).